A 290-amino-acid chain; its full sequence is Signal peptidase I (290 aa).

At 1–13 the chain is on the cytoplasmic side; sequence MKFLRSVYAFCSS. Residues 14–34 traverse the membrane as a helical segment; that stretch reads WVGTIIIVLLVIFFIAQAFII. At 35 to 290 the chain is on the extracellular side; it reads PSRSMVGTLY…KIIKKEKATH (256 aa). Catalysis depends on residues S38 and K106.

Belongs to the peptidase S26 family.

It localises to the cell membrane. It carries out the reaction Cleavage of hydrophobic, N-terminal signal or leader sequences from secreted and periplasmic proteins.. In Helicobacter pylori (strain J99 / ATCC 700824) (Campylobacter pylori J99), this protein is Signal peptidase I (lepB).